Consider the following 382-residue polypeptide: D-galactonate dehydratase (382 aa).

Residue D183 coordinates Mg(2+). H185 functions as the Proton donor in the catalytic mechanism. Mg(2+)-binding residues include E209 and E235. H285 (proton acceptor) is an active-site residue.

This sequence belongs to the mandelate racemase/muconate lactonizing enzyme family. GalD subfamily. Mg(2+) serves as cofactor.

The enzyme catalyses D-galactonate = 2-dehydro-3-deoxy-D-galactonate + H2O. The protein operates within carbohydrate acid metabolism; D-galactonate degradation; D-glyceraldehyde 3-phosphate and pyruvate from D-galactonate: step 1/3. Its function is as follows. Catalyzes the dehydration of D-galactonate to 2-keto-3-deoxy-D-galactonate. The sequence is that of D-galactonate dehydratase from Xanthomonas campestris pv. campestris (strain 8004).